Reading from the N-terminus, the 188-residue chain is Probable DNA-directed RNA polymerase subunit delta (188 aa).

The HTH HARE-type domain maps to 14–81 (LSMIEVAHAL…GNNVWALRSW (68 aa)). The interval 96-188 (EIEDEEEEEK…EDDSDDTDED (93 aa)) is disordered. Acidic residues-rich tracts occupy residues 118-150 (IEDEIDPEDEEGTKETTEEDMSYDTQAEDEDKD) and 158-188 (ELAEVELDNVDEEVDIEVEDDEDDSDDTDED).

It belongs to the RpoE family. As to quaternary structure, RNAP is composed of a core of 2 alpha, a beta and a beta' subunits. The core is associated with a delta subunit and one of several sigma factors.

In terms of biological role, participates in both the initiation and recycling phases of transcription. In the presence of the delta subunit, RNAP displays an increased specificity of transcription, a decreased affinity for nucleic acids, and an increased efficiency of RNA synthesis because of enhanced recycling. The polypeptide is Probable DNA-directed RNA polymerase subunit delta (Lactococcus lactis subsp. cremoris (strain MG1363)).